We begin with the raw amino-acid sequence, 203 residues long: Glycerol-3-phosphate acyltransferase (203 aa).

5 consecutive transmembrane segments (helical) span residues 13–33 (TLACLVFGYLLGSIPFGLILT), 66–86 (TLLLDALKGTAAAAIASLWGV), 88–108 (AGMAAGLAAFLGHLFPVWLSF), 118–138 (IGVLLGLVPVMVLLFAAAWLA), and 156–176 (IIPVALYATGNGKVALLFAVM).

Belongs to the PlsY family. Probably interacts with PlsX.

The protein localises to the cell inner membrane. It carries out the reaction an acyl phosphate + sn-glycerol 3-phosphate = a 1-acyl-sn-glycero-3-phosphate + phosphate. The protein operates within lipid metabolism; phospholipid metabolism. Its function is as follows. Catalyzes the transfer of an acyl group from acyl-phosphate (acyl-PO(4)) to glycerol-3-phosphate (G3P) to form lysophosphatidic acid (LPA). This enzyme utilizes acyl-phosphate as fatty acyl donor, but not acyl-CoA or acyl-ACP. The chain is Glycerol-3-phosphate acyltransferase from Sinorhizobium medicae (strain WSM419) (Ensifer medicae).